The chain runs to 225 residues: Membrane protein (225 aa).

Residues 1–20 (MPNETNCTLDFEQSVQLFKE) lie on the Virion surface side of the membrane. Residues 21–41 (YNLFITAFLLFLTIILQYGYA) form a helical membrane-spanning segment. Topologically, residues 42 to 51 (TRSKVIYTLK) are intravirion. A helical transmembrane segment spans residues 52–72 (MIVLWCFWPLNIAVGVISCTY). The Virion surface segment spans residues 73–77 (PPNTG). Residues 78–98 (GLVAAIILTVFACLSFVGYWI) traverse the membrane as a helical segment. Over 99–225 (QSIRLFKRCR…VATGGSSLYT (127 aa)) the chain is Intravirion.

Belongs to the gammacoronaviruses M protein family. In terms of assembly, homomultimer. Interacts with envelope E protein in the budding compartment of the host cell, which is located between endoplasmic reticulum and the Golgi complex. Forms a complex with HE and S proteins. Interacts with nucleocapsid N protein. This interaction probably participates in RNA packaging into the virus.

The protein localises to the virion membrane. It localises to the host Golgi apparatus membrane. In terms of biological role, component of the viral envelope that plays a central role in virus morphogenesis and assembly via its interactions with other viral proteins. The polypeptide is Membrane protein (Avian infectious bronchitis virus (strain Beaudette) (IBV)).